The sequence spans 95 residues: Aspartyl/glutamyl-tRNA(Asn/Gln) amidotransferase subunit C (95 aa).

The protein belongs to the GatC family. Heterotrimer of A, B and C subunits.

It carries out the reaction L-glutamyl-tRNA(Gln) + L-glutamine + ATP + H2O = L-glutaminyl-tRNA(Gln) + L-glutamate + ADP + phosphate + H(+). The enzyme catalyses L-aspartyl-tRNA(Asn) + L-glutamine + ATP + H2O = L-asparaginyl-tRNA(Asn) + L-glutamate + ADP + phosphate + 2 H(+). In terms of biological role, allows the formation of correctly charged Asn-tRNA(Asn) or Gln-tRNA(Gln) through the transamidation of misacylated Asp-tRNA(Asn) or Glu-tRNA(Gln) in organisms which lack either or both of asparaginyl-tRNA or glutaminyl-tRNA synthetases. The reaction takes place in the presence of glutamine and ATP through an activated phospho-Asp-tRNA(Asn) or phospho-Glu-tRNA(Gln). This Pseudomonas putida (strain ATCC 700007 / DSM 6899 / JCM 31910 / BCRC 17059 / LMG 24140 / F1) protein is Aspartyl/glutamyl-tRNA(Asn/Gln) amidotransferase subunit C.